The following is a 212-amino-acid chain: Octanoyltransferase (212 aa).

In terms of domain architecture, BPL/LPL catalytic spans 33–212 (GTAPELVWLL…ATFPEVFGAD (180 aa)). Substrate contacts are provided by residues 72-79 (RGGQYTYH), 144-146 (AIG), and 157-159 (GIA). The active-site Acyl-thioester intermediate is Cys-175.

This sequence belongs to the LipB family.

The protein localises to the cytoplasm. It carries out the reaction octanoyl-[ACP] + L-lysyl-[protein] = N(6)-octanoyl-L-lysyl-[protein] + holo-[ACP] + H(+). The protein operates within protein modification; protein lipoylation via endogenous pathway; protein N(6)-(lipoyl)lysine from octanoyl-[acyl-carrier-protein]: step 1/2. Catalyzes the transfer of endogenously produced octanoic acid from octanoyl-acyl-carrier-protein onto the lipoyl domains of lipoate-dependent enzymes. Lipoyl-ACP can also act as a substrate although octanoyl-ACP is likely to be the physiological substrate. The chain is Octanoyltransferase from Paramagnetospirillum magneticum (strain ATCC 700264 / AMB-1) (Magnetospirillum magneticum).